The chain runs to 129 residues: Small ribosomal subunit protein uS11 (129 aa).

It belongs to the universal ribosomal protein uS11 family. In terms of assembly, part of the 30S ribosomal subunit. Interacts with proteins S7 and S18. Binds to IF-3.

Its function is as follows. Located on the platform of the 30S subunit, it bridges several disparate RNA helices of the 16S rRNA. Forms part of the Shine-Dalgarno cleft in the 70S ribosome. The sequence is that of Small ribosomal subunit protein uS11 from Allorhizobium ampelinum (strain ATCC BAA-846 / DSM 112012 / S4) (Agrobacterium vitis (strain S4)).